The following is a 90-amino-acid chain: Putative sodium channel toxin Ts28 (90 aa).

An N-terminal signal peptide occupies residues 1 to 23 (MKISLVTWLITALCLMEIEEIDG). The LCN-type CS-alpha/beta domain occupies 26 to 86 (PGNYPVDFQG…FWDVMKKQCD (61 aa)). 3 disulfide bridges follow: C40–C60, C46–C65, and C50–C67.

Belongs to the long (3 C-C) scorpion toxin superfamily. In terms of assembly, monomer (edited version) and heterodimer (non-edited version) of this alpha chain and a beta chain (AC P0CI43). As to expression, expressed by the venom gland.

It localises to the secreted. Functionally, the edited BmKBTx-like may modulate voltage-gated sodium channels (Nav). The non-edited form is able to form a heterodimer. In orthologs, a heterodimer with LVP beta-chain induces lipolysis in rat adipocytes, which is mediated through the beta-2 adrenergic receptor pathway (ADRB2). Since no LVP beta-chains have been identified in the venom of this scorpion, it is possible that this protein is not involved in a lipolysis process. The sequence is that of Putative sodium channel toxin Ts28 from Tityus serrulatus (Brazilian scorpion).